The following is a 7158-amino-acid chain: Twitchin (7158 aa).

Ig-like domains follow at residues Pro-5–Asn-97 and Pro-111–Asn-204. Cystine bridges form between Cys-25–Cys-81 and Cys-132–Cys-188. Disordered stretches follow at residues Asn-204–Leu-381, Glu-473–Arg-639, Lys-658–Ala-732, and Glu-763–Arg-955. Residues Thr-220 to Lys-238 show a composition bias toward low complexity. Composition is skewed to basic and acidic residues over residues Lys-242–Pro-259 and Glu-279–Val-291. Low complexity-rich tracts occupy residues Ser-319–Ser-340 and Ser-347–Asp-368. Residues Pro-377–Lys-466 enclose the Ig-like 3 domain. Residues Arg-504–Ser-513 show a composition bias toward basic residues. Positions Lys-514–Ser-523 are enriched in low complexity. 2 stretches are compositionally biased toward basic and acidic residues: residues Gly-529–Arg-540 and Lys-601–Leu-618. Positions Lys-620 to Ser-630 are enriched in low complexity. A Kelch 1 repeat occupies Val-718–Val-764. 4 stretches are compositionally biased toward basic and acidic residues: residues Glu-763 to Lys-813, Lys-837 to Ala-850, Lys-885 to Lys-897, and Ser-917 to Arg-955. An Ig-like 4 domain is found at Pro-980–Thr-1072. A disordered region spans residues Ser-1088–Gln-1118. Basic and acidic residues predominate over residues Gly-1106–Gln-1118. Ig-like domains are found at residues Pro-1122 to Thr-1213, Pro-1217 to Gln-1306, and Pro-1312 to Ile-1398. An intrachain disulfide couples Cys-1150 to Cys-1201. Fibronectin type-III domains follow at residues Pro-1598 to Pro-1690, Lys-1696 to Lys-1791, Pro-1891 to Pro-1988, Lys-1994 to Lys-2087, Pro-2189 to Pro-2282, Lys-2288 to Arg-2383, Pro-2483 to Pro-2576, and Val-2579 to Arg-2675. The Kelch 2 repeat unit spans residues Pro-2014–Lys-2058. Residues Pro-2086–Thr-2181 form the Ig-like 8 domain. A Kelch 3 repeat occupies Trp-2207–Gln-2253. Basic and acidic residues predominate over residues Gly-2266–Gly-2287. The disordered stretch occupies residues Gly-2266–Val-2295. Residues Lys-2502–His-2547 form a Kelch 4 repeat. The Ig-like 9 domain maps to Pro-2679–Thr-2763. 2 Fibronectin type-III domains span residues Pro-2775–Pro-2868 and Arg-2874–Arg-2968. The stretch at Trp-2793 to Asp-2839 is one Kelch 5 repeat. Positions Asn-2849–Ala-2901 are disordered. The span at Pro-2868–Trp-2892 shows a compositional bias: basic and acidic residues. Residues Pro-2972–Asn-3062 form the Ig-like 10 domain. 2 consecutive Fibronectin type-III domains span residues Pro-3070–Pro-3165 and Lys-3171–Arg-3265. The Kelch 6 repeat unit spans residues Arg-3089–Pro-3134. The Ig-like 11 domain maps to Pro-3268–Thr-3358. Fibronectin type-III domains follow at residues Ser-3365–Pro-3459 and Lys-3465–Arg-3559. A Kelch 7 repeat occupies Trp-3384–His-3430. One can recognise an Ig-like 12 domain in the interval Pro-3563–Asn-3653. 6 consecutive Fibronectin type-III domains span residues Pro-3661–Pro-3753, Ala-3759–Arg-3853, Pro-3954–Gln-4047, Pro-4053–Arg-4146, Pro-4246–Pro-4340, and Lys-4346–Pro-4440. Residues Trp-3972–Lys-4018 form a Kelch 8 repeat. Kelch repeat units lie at residues Lys-4265 to Gly-4310 and Asp-4365 to Lys-4410. The region spanning Pro-4445–Thr-4531 is the Ig-like 13 domain. Fibronectin type-III domains are found at residues Ala-4538–Pro-4631, Ala-4637–Tyr-4733, Ala-4739–Gln-4834, Pro-4936–Pro-5028, Ala-5034–Ala-5129, Ser-5231–Tyr-5326, Gln-5333–Arg-5427, and Pro-5430–Ser-5528. One copy of the Kelch 11 repeat lies at Asp-4557–Gly-4602. The stretch at Leu-5287–Glu-5335 is one Kelch 12 repeat. Positions Pro-5533–Val-5621 constitute an Ig-like 14 domain. Fibronectin type-III domains are found at residues Pro-5723 to Pro-5817 and Ser-5823 to Ser-5919. The Kelch 13 repeat unit spans residues Arg-5742–Asn-5787. Ig-like domains are found at residues Pro-5923–Arg-6011 and Pro-6016–Thr-6107. A disulfide bridge connects residues Cys-5944 and Cys-5995. Residues Pro-6114 to Asp-6207 enclose the Fibronectin type-III 31 domain. The region spanning Tyr-6261–Leu-6516 is the Protein kinase domain. ATP-binding positions include Leu-6267–Val-6275 and Lys-6290. Catalysis depends on Asp-6382, which acts as the Proton acceptor. Residues Thr-6517–Ser-6581 are C-terminal regulatory domain (CDR). 5 Ig-like domains span residues Pro-6585–Asn-6673, Pro-6696–Thr-6795, Pro-6863–Thr-6952, Pro-6958–Val-7059, and Pro-7067–Ala-7149.

Belongs to the protein kinase superfamily. CAMK Ser/Thr protein kinase family. In terms of assembly, may interact (via protein kinase and CRD domains) with mak-1 (via protein kinase domain). It depends on Mg(2+) as a cofactor. Post-translationally, phosphorylated by mak-1 on the protein kinase domain and/or CDR domain in vitro. In terms of tissue distribution, expressed in body wall, anal, vulval, and pharyngeal muscles (at protein level).

It is found in the cytoplasm. The protein localises to the myofibril. Its subcellular location is the sarcomere. It localises to the a band. It catalyses the reaction L-seryl-[protein] + ATP = O-phospho-L-seryl-[protein] + ADP + H(+). The catalysed reaction is L-threonyl-[protein] + ATP = O-phospho-L-threonyl-[protein] + ADP + H(+). With respect to regulation, forces generated by the contraction/relaxation cycles of muscle activity separate the regulatory domain from the catalytic core, activating the enzyme. At rest, the kinase domain is in a closed conformation. The active site is occupied by the autoinhibitory region (CDR), which makes extensive contact with the catalytic site, blocking substrate binding. At low forces the regulatory tail will unravel reversibly and expose the active site to its substrates, potentially stabilized by binding of Ca/CALM. At high forces the kinase begins to unfold and the integrity of the active site is disrupted. Its function is as follows. Regulator of muscle contraction and relaxation. Senses mechanical strain that occurs during muscle activity by unfolding in clearly resolvable steps at differing forces. Plays a role in the organization of sarcomeres in body wall muscles. The sequence is that of Twitchin from Caenorhabditis elegans.